Reading from the N-terminus, the 440-residue chain is 2-methylisoborneol synthase (440 aa).

2 disordered regions span residues 1–33 (MPDS…IPSA) and 46–74 (LHPP…TVTG). Composition is skewed to pro residues over residues 9-29 (TPPP…PAPV) and 50-63 (VTVP…PPAP). Residues Asp-197, Asp-198, Glu-202, Asn-345, Ser-349, and Glu-353 each coordinate Mg(2+).

Belongs to the terpene synthase family. 2-methylisoborneol synthase subfamily. Mg(2+) is required as a cofactor.

It catalyses the reaction (E)-2-methylgeranyl diphosphate + H2O = 2-methylisoborneol + diphosphate. Functionally, catalyzes the cyclization of 2-methylgeranyl diphosphate (2-MeGPP) to 2-methylisoborneol (2-MIB), which likely involves the intermediacy of 2-methyllinalyl diphosphate. Is also able to catalyze the cyclization of geranyl diphosphate (GPP), albeit with much lower efficiency, leading to the formation of a complex mixture of cyclic monoterpenes, consisting of alpha-pinene (6%), beta-pinene (23%), limonene (32%), gamma-terpinene (29%), and delta-terpinene (10%). This is 2-methylisoborneol synthase from Streptomyces coelicolor (strain ATCC BAA-471 / A3(2) / M145).